The sequence spans 156 residues: S-ribosylhomocysteine lyase (156 aa).

Residues H53, H57, and C122 each contribute to the Fe cation site.

This sequence belongs to the LuxS family. As to quaternary structure, homodimer. It depends on Fe cation as a cofactor.

It carries out the reaction S-(5-deoxy-D-ribos-5-yl)-L-homocysteine = (S)-4,5-dihydroxypentane-2,3-dione + L-homocysteine. Functionally, involved in the synthesis of autoinducer 2 (AI-2) which is secreted by bacteria and is used to communicate both the cell density and the metabolic potential of the environment. The regulation of gene expression in response to changes in cell density is called quorum sensing. Catalyzes the transformation of S-ribosylhomocysteine (RHC) to homocysteine (HC) and 4,5-dihydroxy-2,3-pentadione (DPD). The chain is S-ribosylhomocysteine lyase from Finegoldia magna (strain ATCC 29328 / DSM 20472 / WAL 2508) (Peptostreptococcus magnus).